Reading from the N-terminus, the 201-residue chain is Glycolipid transfer protein (201 aa).

The tract at residues Ile28–Asp168 is glycolipid transfer protein homology domain.

In terms of biological role, cargo transport protein that plays a key role in transport and secretion of liamocins, glycolipids (also called heavy oils) composed of a single mannitol or arabitol headgroup linked to either three, four or even six 3,5-dihydroxydecanoic ester tail-groups. The sequence is that of Glycolipid transfer protein from Aureobasidium melanogenum (Aureobasidium pullulans var. melanogenum).